The following is a 354-amino-acid chain: CX3C chemokine receptor 1 (354 aa).

The Extracellular portion of the chain corresponds to 1-32 (MPTSFPELDLENFEYDDSAEACYLGDIVAFGT). Residues 33–60 (IFLSIFYSLVFTFGLVGNLLVVLALTNS) traverse the membrane as a helical segment. Topologically, residues 61-70 (RKSKSITDIY) are cytoplasmic. A helical membrane pass occupies residues 71–91 (LLNLALSDLLFVATLPFWTHY). The Extracellular segment spans residues 92 to 104 (LISHEGLHNAMCK). Cys-103 and Cys-176 are disulfide-bonded. The helical transmembrane segment at 105–126 (LTTAFFFIGFFGGIFFITVISI) threads the bilayer. The Cytoplasmic portion of the chain corresponds to 127–143 (DRYLAIVLAANSMNNRT). The helical transmembrane segment at 144 to 168 (VQHGVTISLGVWAAAILVASPQFMF) threads the bilayer. The Extracellular portion of the chain corresponds to 169–196 (TKRKDNECLGDYPEVLQEIWPVLRNSEV). The chain crosses the membrane as a helical span at residues 197-216 (NILGFVLPLLIMSFCYFRIV). The Cytoplasmic segment spans residues 217-232 (RTLFSCKNRKKARAIR). The helical transmembrane segment at 233-257 (LILLVVVVFFLFWTPYNIVIFLETL) threads the bilayer. Residues 258 to 274 (KFYNFFPSCGMKRDLRW) lie on the Extracellular side of the membrane. The chain crosses the membrane as a helical span at residues 275 to 298 (ALSVTETVAFSHCCLNPFIYAFAG). At 299–354 (EKFRRYLRHLYNKCLAVLCGRPVHAGFSTESQRSRQDSILSSLTHYTSEGEGSLLL) the chain is on the cytoplasmic side. Position 345 is a phosphothreonine (Thr-345).

The protein belongs to the G-protein coupled receptor 1 family. Found in a ternary complex with CX3CL1 and ITGAV:ITGB3 or ITGA4:ITGB1. Post-translationally, this protein is not N-glycosylated which is unusual for G-protein-coupled receptors. As to expression, most abundant in adult spinal cord, brain, kidney, gut, uterus and testes.

The protein resides in the cell membrane. Its function is as follows. Receptor for the C-X3-C chemokine fractalkine (CX3CL1) present on many early leukocyte cells; CX3CR1-CX3CL1 signaling exerts distinct functions in different tissue compartments, such as immune response, inflammation, cell adhesion and chemotaxis. CX3CR1-CX3CL1 signaling mediates cell migratory functions. Responsible for the recruitment of natural killer (NK) cells to inflamed tissues. Acts as a regulator of inflammation process leading to atherogenesis by mediating macrophage and monocyte recruitment to inflamed atherosclerotic plaques, promoting cell survival. Involved in airway inflammation by promoting interleukin 2-producing T helper (Th2) cell survival in inflamed lung. Involved in the migration of circulating monocytes to non-inflamed tissues, where they differentiate into macrophages and dendritic cells. Acts as a negative regulator of angiogenesis, probably by promoting macrophage chemotaxis. Plays a key role in brain microglia by regulating inflammatory response in the central nervous system (CNS) and regulating synapse maturation. Required to restrain the microglial inflammatory response in the CNS and the resulting parenchymal damage in response to pathological stimuli. Involved in brain development by participating in synaptic pruning, a natural process during which brain microglia eliminates extra synapses during postnatal development. Synaptic pruning by microglia is required to promote the maturation of circuit connectivity during brain development. Acts as an important regulator of the gut microbiota by controlling immunity to intestinal bacteria and fungi. Expressed in lamina propria dendritic cells in the small intestine, which form transepithelial dendrites capable of taking up bacteria in order to provide defense against pathogenic bacteria. Required to initiate innate and adaptive immune responses against dissemination of commensal fungi (mycobiota) component of the gut: expressed in mononuclear phagocytes (MNPs) and acts by promoting induction of antifungal IgG antibodies response to confer protection against disseminated C.albicans or C.auris infection. Also acts as a receptor for C-C motif chemokine CCL26, inducing cell chemotaxis. The sequence is that of CX3C chemokine receptor 1 from Rattus norvegicus (Rat).